Reading from the N-terminus, the 399-residue chain is Transcription termination factor 1, mitochondrial (399 aa).

Residues 1–57 (MQSLSLGQTSISKGLNYLTIMAPGNLWHMRNNFLFGSRCWMTRFSAENIFKSVSFRL) constitute a mitochondrion transit peptide. 5 interaction with DNA regions span residues 169 to 170 (RS), 247 to 251 (QSTKR), 324 to 331 (AEKKFNDK), 355 to 358 (SIST), and 384 to 391 (SKKRYEAK).

The protein belongs to the mTERF family. In terms of assembly, monomer. Phosphoprotein with mostly four phosphate groups. While the DNA-binding activity is unaffected by the phosphorylation state, only the phosphorylated form of the protein is active for termination activity. Functioning seems to be regulated by phosphorylation.

The protein localises to the mitochondrion. Its function is as follows. Transcription termination factor. Binds to a 28 bp region within the tRNA(Leu(uur)) gene at a position immediately adjacent to and downstream of the 16S rRNA gene; this region comprises a tridecamer sequence critical for directing accurate termination. Binds DNA along the major grove and promotes DNA bending and partial unwinding. Promotes base flipping. Transcription termination activity appears to be polarized with highest specificity for transcripts initiated on the light strand. In Homo sapiens (Human), this protein is Transcription termination factor 1, mitochondrial (MTERF1).